The chain runs to 156 residues: Small ribosomal subunit protein uS7 (156 aa).

The protein belongs to the universal ribosomal protein uS7 family. Part of the 30S ribosomal subunit. Contacts proteins S9 and S11.

Functionally, one of the primary rRNA binding proteins, it binds directly to 16S rRNA where it nucleates assembly of the head domain of the 30S subunit. Is located at the subunit interface close to the decoding center, probably blocks exit of the E-site tRNA. The protein is Small ribosomal subunit protein uS7 of Nostoc punctiforme (strain ATCC 29133 / PCC 73102).